The primary structure comprises 135 residues: ATP synthase epsilon chain (135 aa).

The protein belongs to the ATPase epsilon chain family. As to quaternary structure, F-type ATPases have 2 components, CF(1) - the catalytic core - and CF(0) - the membrane proton channel. CF(1) has five subunits: alpha(3), beta(3), gamma(1), delta(1), epsilon(1). CF(0) has three main subunits: a, b and c.

It localises to the cellular thylakoid membrane. Produces ATP from ADP in the presence of a proton gradient across the membrane. This Prochlorococcus marinus (strain MIT 9211) protein is ATP synthase epsilon chain.